The primary structure comprises 309 residues: Probable inactive poly [ADP-ribose] polymerase SRO5 (309 aa).

Residues 28 to 255 form the PARP catalytic domain; that stretch reads CDSSSDRSFA…AFPVLIKALS (228 aa). Positions 238–309 constitute an RST domain; sequence KRLRSPWMAF…IKACGHKVQH (72 aa).

In terms of assembly, interacts with dehydration-responsive DREB2 proteins and a number of transcription factors belonging to several protein families.

Its subcellular location is the nucleus matrix. Functionally, probable inactive ADP-ribosyltransferase that may be involved in stress and developmental responses. The polypeptide is Probable inactive poly [ADP-ribose] polymerase SRO5 (SRO5) (Arabidopsis thaliana (Mouse-ear cress)).